The sequence spans 747 residues: Nucleolar complex-associated protein 3 (747 aa).

The span at 1–11 (MAARKNQKSPK) shows a compositional bias: basic residues. The interval 1–142 (MAARKNQKSP…EDEQDYELRP (142 aa)) is disordered. Over residues 74-86 (ENPSSLKYLSSIN) the composition is skewed to polar residues. Residues 89-109 (DLGKKVEKGPRPDIYDLKKSQ) are compositionally biased toward basic and acidic residues. A Phosphoserine modification is found at Ser120. Positions 214–234 (KQQIKNDKEALGIQAQQLLEE) form a coiled coil.

Belongs to the CBF/MAK21 family.

It is found in the nucleus. Its subcellular location is the nucleolus. May be required for synthesis of 60S ribosomal subunits and the transport of pre-ribosomes from the nucleoplasm to the cytoplasm. The protein is Nucleolar complex-associated protein 3 (noc3) of Schizosaccharomyces pombe (strain 972 / ATCC 24843) (Fission yeast).